A 124-amino-acid polypeptide reads, in one-letter code: MMSENITAVEPQENNDVEADSDPFNIDKLIVDYDYLLYKIQDELESIQLKTLEICQKQNEIVEHGIIEEVIDGNIGMAKDLLQKCDDLEKHYDQLDAVEGIVVSFKSRLKGVITQYKKYIDTKK.

A disordered region spans residues 1–20; that stretch reads MMSENITAVEPQENNDVEAD. Positions 75-98 form a coiled coil; it reads IGMAKDLLQKCDDLEKHYDQLDAV.

Belongs to the BLOC1S4 family. In terms of assembly, component of the biogenesis of lysosome-related organelles complex-1 (BLOC-1).

The protein resides in the cytoplasm. Component of the biogenesis of lysosome-related organelles complex-1 (BLOC-1), a complex that is involved in endosomal cargo sorting. This chain is Biogenesis of lysosome-related organelles complex 1 subunit CNL1 (CLN1), found in Kluyveromyces lactis (strain ATCC 8585 / CBS 2359 / DSM 70799 / NBRC 1267 / NRRL Y-1140 / WM37) (Yeast).